Consider the following 324-residue polypeptide: Phosphate transport system permease protein PstC (324 aa).

6 helical membrane passes run 29 to 49 (LLLT…ALSM), 87 to 107 (IVTA…IAFF), 126 to 146 (LLAG…LVPV), 173 to 193 (PLGI…IPFI), 235 to 255 (VIGG…AVAF), and 291 to 311 (SALL…LVIA). One can recognise an ABC transmembrane type-1 domain in the interval 83-311 (IYGTIVTALI…IVTFAVLVIA (229 aa)).

This sequence belongs to the binding-protein-dependent transport system permease family. CysTW subfamily.

The protein localises to the cell inner membrane. In terms of biological role, part of a binding-protein-dependent transport system for phosphate; probably responsible for the translocation of the substrate across the membrane. The polypeptide is Phosphate transport system permease protein PstC (pstC) (Xylella fastidiosa (strain Temecula1 / ATCC 700964)).